The following is a 94-amino-acid chain: Small ribosomal subunit protein uS19c (94 aa).

The protein belongs to the universal ribosomal protein uS19 family.

The protein localises to the plastid. Its subcellular location is the chloroplast. In terms of biological role, protein S19 forms a complex with S13 that binds strongly to the 16S ribosomal RNA. The protein is Small ribosomal subunit protein uS19c of Pleurastrum terricola (Filamentous green alga).